Here is a 450-residue protein sequence, read N- to C-terminus: Exodeoxyribonuclease 7 large subunit (450 aa).

Belongs to the XseA family. Heterooligomer composed of large and small subunits.

Its subcellular location is the cytoplasm. The catalysed reaction is Exonucleolytic cleavage in either 5'- to 3'- or 3'- to 5'-direction to yield nucleoside 5'-phosphates.. Bidirectionally degrades single-stranded DNA into large acid-insoluble oligonucleotides, which are then degraded further into small acid-soluble oligonucleotides. The chain is Exodeoxyribonuclease 7 large subunit from Listeria innocua serovar 6a (strain ATCC BAA-680 / CLIP 11262).